The sequence spans 184 residues: Trypsin/chymotrypsin inhibitor (184 aa).

Cystine bridges form between Cys-39/Cys-84 and Cys-136/Cys-147.

This sequence belongs to the protease inhibitor I3 (leguminous Kunitz-type inhibitor) family. Homodimer.

In terms of biological role, inhibits trypsin and alpha-chymotrypsin. The sequence is that of Trypsin/chymotrypsin inhibitor from Alocasia macrorrhizos (Giant taro).